The sequence spans 524 residues: Zinc finger CCCH domain-containing protein 37 (524 aa).

The interval 19–39 (ASTVSPAPPPPQQPLPPKTGL) is disordered. Residues 24 to 35 (PAPPPPQQPLPP) are compositionally biased toward pro residues. C3H1-type zinc fingers lie at residues 174–202 (RAGE…HPIW), 225–253 (RPGE…HPRE), and 268–296 (RPSE…HPKD). The disordered stretch occupies residues 300–319 (PSSSQDIGSSVGLTSEPDAT). 3 consecutive C3H1-type zinc fingers follow at residues 340 to 368 (RSGE…HPER), 420 to 448 (RPGQ…HPAD), and 473 to 501 (REGA…HPPP). The tract at residues 505 to 524 (MAKTTSEADAAGATNTDTTQ) is disordered. Positions 512–524 (ADAAGATNTDTTQ) are enriched in low complexity.

As to quaternary structure, interacts with HEN4. Interacts with FLK and PEP. In terms of tissue distribution, highly expressed in inflorescences, at intermediate levels in leaves and stems and at lower levels in roots.

It localises to the nucleus speckle. Involved in flower development. Functions in floral reproductive organ identity by binding AGAMOUS (AG) pre-mRNA and promoting its processing. Functions in association with HUA2 and HEN4. In Arabidopsis thaliana (Mouse-ear cress), this protein is Zinc finger CCCH domain-containing protein 37 (HUA1).